The chain runs to 66 residues: UPF0337 protein spyM18_1212 (66 aa).

This sequence belongs to the UPF0337 (CsbD) family.

The polypeptide is UPF0337 protein spyM18_1212 (Streptococcus pyogenes serotype M18 (strain MGAS8232)).